Consider the following 142-residue polypeptide: Large ribosomal subunit protein uL11 (142 aa).

This sequence belongs to the universal ribosomal protein uL11 family. In terms of assembly, part of the ribosomal stalk of the 50S ribosomal subunit. Interacts with L10 and the large rRNA to form the base of the stalk. L10 forms an elongated spine to which L12 dimers bind in a sequential fashion forming a multimeric L10(L12)X complex. One or more lysine residues are methylated.

Its function is as follows. Forms part of the ribosomal stalk which helps the ribosome interact with GTP-bound translation factors. The chain is Large ribosomal subunit protein uL11 from Maricaulis maris (strain MCS10) (Caulobacter maris).